The primary structure comprises 180 residues: Acireductone dioxygenase (180 aa).

Fe(2+) is bound by residues H99, H101, E105, and H145. Residues H99, H101, E105, and H145 each coordinate Ni(2+).

Belongs to the acireductone dioxygenase (ARD) family. As to quaternary structure, monomer. It depends on Fe(2+) as a cofactor. Ni(2+) serves as cofactor.

It catalyses the reaction 1,2-dihydroxy-5-(methylsulfanyl)pent-1-en-3-one + O2 = 3-(methylsulfanyl)propanoate + CO + formate + 2 H(+). The enzyme catalyses 1,2-dihydroxy-5-(methylsulfanyl)pent-1-en-3-one + O2 = 4-methylsulfanyl-2-oxobutanoate + formate + 2 H(+). The protein operates within amino-acid biosynthesis; L-methionine biosynthesis via salvage pathway; L-methionine from S-methyl-5-thio-alpha-D-ribose 1-phosphate: step 5/6. Functionally, catalyzes 2 different reactions between oxygen and the acireductone 1,2-dihydroxy-3-keto-5-methylthiopentene (DHK-MTPene) depending upon the metal bound in the active site. Fe-containing acireductone dioxygenase (Fe-ARD) produces formate and 2-keto-4-methylthiobutyrate (KMTB), the alpha-ketoacid precursor of methionine in the methionine recycle pathway. Ni-containing acireductone dioxygenase (Ni-ARD) produces methylthiopropionate, carbon monoxide and formate, and does not lie on the methionine recycle pathway. The sequence is that of Acireductone dioxygenase from Geobacillus thermodenitrificans (strain NG80-2).